The primary structure comprises 100 residues: Omega toxin Ap2 (100 aa).

An N-terminal signal peptide occupies residues 1–22; sequence MNTTQVILFAVVLVLTVTVGQA. A propeptide spanning residues 23 to 57 is cleaved from the precursor; it reads DEDSAETSLLRKLEEAEASMFGQYLEESKNSPEQR. Disulfide bonds link cysteine 58/cysteine 74, cysteine 65/cysteine 79, and cysteine 73/cysteine 94. Serine 99 bears the Serine amide mark.

Belongs to the neurotoxin 14 (magi-1) family. 08 (Ltx-4) subfamily. In terms of tissue distribution, expressed by the venom duct.

The protein resides in the secreted. Inhibits 31.17% of Cav2.1/CACNA1A current at 1 uM concentration. The chain is Omega toxin Ap2 from Acanthoscurria paulensis (Brazilian giant black tarantula spider).